The following is a 508-amino-acid chain: MKFNFWKGLWKPKSLTPTLSHRLYRRMYTPQPPLNREMTVLDRSKFTVSLNLALAKFPDPKYIAQFAKECKADILQLRSINHVQKTDDNGRAVLLRHDLDLEGGEDVASKVMSQLSPRGKELLTEAQADITKIVKDLDYDFWRADEIFYSVLPVTEKDEIPSGFSMVGHVAHLNLRSEWKDYDRLIGQVILDKNPRVKTVVNKVDSIDTKFRTFKMDVLAGEDNTEVEQHESGCRFQFDFAKVYWNSRLHTEHDRLVSLFRGEASSRERKQQERAKRENHEKSTETAVEPDNTPATAVCDVFAGVGPFAVPSGRTSLFVMANDLNPYSYEALEHNVKLNKVSEYVKCFNLDGAEYVQQSMKLLDEHRRTQPTINPVQVRKRKAGQPVVKQDIPNHYSHYVMNLPDSAIEFLWSFKGLYTTVDGLSQDTPLPHVHVHCFHKWEAGEEEPSKEETKAALLERVYKQIDVRLDPNEVGMHWVRKVSPKKDMFCISFELPKEVAWAPQVNKE.

The N-terminal 53 residues, 1–53 (MKFNFWKGLWKPKSLTPTLSHRLYRRMYTPQPPLNREMTVLDRSKFTVSLNLA), are a transit peptide targeting the mitochondrion. H253 contributes to the S-adenosyl-L-methionine binding site. The segment covering 267–284 (RERKQQERAKRENHEKST) has biased composition (basic and acidic residues). The disordered stretch occupies residues 267–291 (RERKQQERAKRENHEKSTETAVEPD). Residues 323–324 (DL), 351–352 (DG), and N402 each bind S-adenosyl-L-methionine.

Belongs to the class I-like SAM-binding methyltransferase superfamily. TRM5/TYW2 family. As to quaternary structure, monomer.

Its subcellular location is the mitochondrion matrix. It is found in the nucleus. It localises to the cytoplasm. It catalyses the reaction guanosine(37) in tRNA + S-adenosyl-L-methionine = N(1)-methylguanosine(37) in tRNA + S-adenosyl-L-homocysteine + H(+). Functionally, specifically methylates the N1 position of guanosine-37 in various cytoplasmic and mitochondrial tRNAs. Methylation is not dependent on the nature of the nucleoside 5' of the target nucleoside. This is the first step in the biosynthesis of wybutosine (yW), a modified base adjacent to the anticodon of tRNAs and required for accurate decoding. The chain is tRNA (guanine(37)-N(1))-methyltransferase from Yarrowia lipolytica (strain CLIB 122 / E 150) (Yeast).